The sequence spans 568 residues: MLVLTETSVGFVVFKLSSDAKIDNKDLWKEFETPEGANKALKVQAIQRFTSTASAVEDLTAVQDGRLTDSLSRFLLDTVGGADDGEKKKKKKKIEEMLVVSDPKLAGTINKALSIPVLSDSSTQDLYRGIRQQLASLLGGVDQKDLNTMSLGLGHSLSRFKLKFSTDKVDTMVIQAIALLDDLDKEINIYAMRVKEWYGWHFPEMAKIIVDNIAFARVVKAMGFRTNAVTTDFSLLLPEDLEATLKSAAELSMGTEISDSDMTHIHSLCDQVISISEYRTQLSEYLRNRMQAIAPNLTALVGELVGARLISHAGSLMNLAKHPASTVQILGAEKALFRALKTKHDTPKYGLIYHASLIGQAPQKLKGKMARMVATKAALSIRVDALSDADSRSDVSAAEVGISNRVKLESRLRALEHQAGIQSVRKVVSANGQQGRQQPRFEMSGVTGSYNAATDNVPLNGDLLPTQPATEEVKEEKDEKKDKKDKKKKRKSEVAEAGDVTMDGDADLSMVAGETKEERRARKEAKKAAKAAKKAAEESGDGDKKSKKRRADEDEDSEKKKKKKKKDE.

Positions 293 to 417 constitute a Nop domain; the sequence is IAPNLTALVG…LESRLRALEH (125 aa). Positions 430–568 are disordered; the sequence is ANGQQGRQQP…KKKKKKKKDE (139 aa). Basic and acidic residues predominate over residues 471 to 482; it reads EEVKEEKDEKKD. Over residues 522 to 533 the composition is skewed to basic residues; it reads RKEAKKAAKAAK. A compositionally biased stretch (basic and acidic residues) spans 534–544; sequence KAAEESGDGDK.

The protein belongs to the NOP5/NOP56 family.

The protein resides in the nucleus. The protein localises to the nucleolus. Functionally, required for pre-18S rRNA processing. May bind microtubules. This chain is Nucleolar protein 58 (NOP58), found in Cryptococcus neoformans var. neoformans serotype D (strain JEC21 / ATCC MYA-565) (Filobasidiella neoformans).